Here is a 101-residue protein sequence, read N- to C-terminus: Protein RnfH (101 aa).

It belongs to the UPF0125 (RnfH) family.

The sequence is that of Protein RnfH from Coxiella burnetii (strain RSA 331 / Henzerling II).